Consider the following 165-residue polypeptide: Bark lectin isoform 1 (165 aa).

2 N-linked (GlcNAc...) asparagine glycosylation sites follow: Asn27 and Asn57. Intrachain disulfides connect Cys33-Cys80 and Cys126-Cys133.

Belongs to the protease inhibitor I3 (leguminous Kunitz-type inhibitor) family. Dimer.

Its function is as follows. Glucose and N-acetylglucosamine binding lectin. Has hemagglutinating activity against human and rabbit erythrocytes which does not require divalent cations. Inhibits factor Xa and, to a lesser extent, trypsin. Does not inhibit neutrophil elastase, human plasma kallikrein, papain, human plasmin, porcine pancreatic kallikrein and bovin chymotrypsin. Has insecticidal activity against the termite species N.corniger. Induces apoptosis in prostrate cancer cell lines DU145 and PC3. The chain is Bark lectin isoform 1 from Crateva tapia (Garlic-pear tree).